Consider the following 343-residue polypeptide: UDP-3-O-acylglucosamine N-acyltransferase 2 (343 aa).

H251 serves as the catalytic Proton acceptor.

Belongs to the transferase hexapeptide repeat family. LpxD subfamily. As to quaternary structure, homotrimer.

The enzyme catalyses a UDP-3-O-[(3R)-3-hydroxyacyl]-alpha-D-glucosamine + a (3R)-hydroxyacyl-[ACP] = a UDP-2-N,3-O-bis[(3R)-3-hydroxyacyl]-alpha-D-glucosamine + holo-[ACP] + H(+). It functions in the pathway bacterial outer membrane biogenesis; LPS lipid A biosynthesis. Its function is as follows. Catalyzes the N-acylation of UDP-3-O-acylglucosamine using 3-hydroxyacyl-ACP as the acyl donor. Is involved in the biosynthesis of lipid A, a phosphorylated glycolipid that anchors the lipopolysaccharide to the outer membrane of the cell. This is UDP-3-O-acylglucosamine N-acyltransferase 2 from Legionella pneumophila (strain Paris).